The chain runs to 142 residues: Large-conductance mechanosensitive channel (142 aa).

A run of 3 helical transmembrane segments spans residues 10-30 (FAVK…GAFG), 40-60 (LIMP…LFVV), and 86-106 (GNFI…FMMV).

It belongs to the MscL family. As to quaternary structure, homopentamer.

Its subcellular location is the cell inner membrane. Functionally, channel that opens in response to stretch forces in the membrane lipid bilayer. May participate in the regulation of osmotic pressure changes within the cell. The polypeptide is Large-conductance mechanosensitive channel (Delftia acidovorans (strain DSM 14801 / SPH-1)).